The sequence spans 368 residues: CCA-adding enzyme (368 aa).

Residues glycine 8 and arginine 11 each coordinate ATP. Residues glycine 8 and arginine 11 each coordinate CTP. Residues aspartate 21 and aspartate 23 each contribute to the Mg(2+) site. Residues arginine 91, arginine 137, and arginine 140 each coordinate ATP. The CTP site is built by arginine 91, arginine 137, and arginine 140.

This sequence belongs to the tRNA nucleotidyltransferase/poly(A) polymerase family. Bacterial CCA-adding enzyme type 2 subfamily. Requires Mg(2+) as cofactor.

The catalysed reaction is a tRNA precursor + 2 CTP + ATP = a tRNA with a 3' CCA end + 3 diphosphate. It catalyses the reaction a tRNA with a 3' CCA end + 2 CTP + ATP = a tRNA with a 3' CCACCA end + 3 diphosphate. In terms of biological role, catalyzes the addition and repair of the essential 3'-terminal CCA sequence in tRNAs without using a nucleic acid template. Adds these three nucleotides in the order of C, C, and A to the tRNA nucleotide-73, using CTP and ATP as substrates and producing inorganic pyrophosphate. tRNA 3'-terminal CCA addition is required both for tRNA processing and repair. Also involved in tRNA surveillance by mediating tandem CCA addition to generate a CCACCA at the 3' terminus of unstable tRNAs. While stable tRNAs receive only 3'-terminal CCA, unstable tRNAs are marked with CCACCA and rapidly degraded. This Pseudomonas putida (strain ATCC 700007 / DSM 6899 / JCM 31910 / BCRC 17059 / LMG 24140 / F1) protein is CCA-adding enzyme.